Here is a 319-residue protein sequence, read N- to C-terminus: Taste receptor type 2 member 7 (319 aa).

Residues 1 to 9 (MADKVQTTL) are Extracellular-facing. A helical membrane pass occupies residues 10–30 (LFLAVGEFSVGILGNAFIGLV). The Cytoplasmic portion of the chain corresponds to 31–55 (NCMDWVKKRKIASIDLILTSLAISR). The chain crosses the membrane as a helical span at residues 56–76 (ICLLCVILLDCFILVLYPDVY). The Extracellular segment spans residues 77-94 (ATGKEMRIIDFFWTLTNH). A helical membrane pass occupies residues 95–115 (LSIWFATCLSIYYXFRIANFF). Topologically, residues 116-128 (HPLFLWMKWRIDR) are cytoplasmic. A helical transmembrane segment spans residues 129–149 (VISWILLGCVVLSVFISLPAT). Residues 150 to 187 (ENLNADFRFCVKAKRKTNLTWSCRVNKTQHASTKLFLN) lie on the Extracellular side of the membrane. 2 N-linked (GlcNAc...) asparagine glycosylation sites follow: Asn167 and Asn175. The helical transmembrane segment at 188 to 208 (LATLLPFCVCLMSFFLLILSL) threads the bilayer. Residues 209-235 (RRHIRRMQLSATGCRDPSTEAHVRALK) are Cytoplasmic-facing. Residues 236 to 256 (AVISFLLLFIAYYLSFLVATS) traverse the membrane as a helical segment. The Extracellular segment spans residues 257-266 (SYFMPETELA). The helical transmembrane segment at 267-287 (VIFGESIALIYPSSHSFILIL) threads the bilayer. Residues 288-319 (GNNKLRHASLKVIWKVMSILKGRKFQQHKQIG) are Cytoplasmic-facing.

The protein belongs to the G-protein coupled receptor T2R family.

It localises to the membrane. Gustducin-coupled receptor implicated in the perception of bitter compounds in the oral cavity and the gastrointestinal tract. Signals through PLCB2 and the calcium-regulated cation channel TRPM5. The sequence is that of Taste receptor type 2 member 7 (TAS2R7) from Pan troglodytes (Chimpanzee).